The following is a 376-amino-acid chain: Immunoglobulin G-binding protein H (376 aa).

The signal sequence occupies residues 1–41; the sequence is MTRQQTKKNYSLRKLKTGTASVAVALTVLGAGFANQTTVKA. The interval 69 to 271 is disordered; sequence TSLENEKLKS…AAKKELEANH (203 aa). Composition is skewed to basic and acidic residues over residues 72-146, 156-203, 211-245, and 253-271; these read ENEK…KRYQ, ETEK…DKQI, LSRD…DKQI, and LSRD…EANH. C repeat units lie at residues 153–187, 195–229, and 237–271; these read QQLE…EAEH and QKLK…EANH. 4 D repeats span residues 272-277, 278-283, 286-291, and 293-298; these read QKLEAE, AKALKE, AKQAEE, and AKLRAG. Residues 292 to 348 are disordered; it reads LAKLRAGKASDSQTPDTKPGNKAVPGKGQAPQAGTKPNQNKAPMKETKRQLPSTGET. The LPXTG sorting signal motif lies at 342–346; that stretch reads LPSTG. At Thr-345 the chain carries Pentaglycyl murein peptidoglycan amidated threonine. A propeptide spans 346–376 (removed by sortase); the sequence is GETANPFFTAAALTVMATAGVAAVVKRKEEN.

It belongs to the M protein family.

Its subcellular location is the secreted. The protein resides in the cell wall. The protein is Immunoglobulin G-binding protein H of Streptococcus pyogenes serotype M1.